We begin with the raw amino-acid sequence, 105 residues long: Iron-sulfur cluster assembly protein CyaY (105 aa).

It belongs to the frataxin family.

Functionally, involved in iron-sulfur (Fe-S) cluster assembly. May act as a regulator of Fe-S biogenesis. The polypeptide is Iron-sulfur cluster assembly protein CyaY (Psychromonas ingrahamii (strain DSM 17664 / CCUG 51855 / 37)).